The chain runs to 415 residues: 26S proteasome regulatory subunit 6B (415 aa).

203–210 contributes to the ATP binding site; it reads GPPGCGKT.

This sequence belongs to the AAA ATPase family.

The protein resides in the cytoplasm. It is found in the nucleus. Functionally, the 26S proteasome is involved in the ATP-dependent degradation of ubiquitinated proteins. The regulatory (or ATPase) complex confers ATP dependency and substrate specificity to the 26S complex. The chain is 26S proteasome regulatory subunit 6B from Manduca sexta (Tobacco hawkmoth).